The chain runs to 613 residues: Dihydroxy-acid dehydratase (613 aa).

A Mg(2+)-binding site is contributed by Asp81. [2Fe-2S] cluster is bound at residue Cys122. Residues Asp123 and Lys124 each coordinate Mg(2+). Position 124 is an N6-carboxylysine (Lys124). Residue Cys195 coordinates [2Fe-2S] cluster. Glu491 is a Mg(2+) binding site. Residue Ser517 is the Proton acceptor of the active site.

The protein belongs to the IlvD/Edd family. Homodimer. Requires [2Fe-2S] cluster as cofactor. It depends on Mg(2+) as a cofactor.

The catalysed reaction is (2R)-2,3-dihydroxy-3-methylbutanoate = 3-methyl-2-oxobutanoate + H2O. The enzyme catalyses (2R,3R)-2,3-dihydroxy-3-methylpentanoate = (S)-3-methyl-2-oxopentanoate + H2O. It participates in amino-acid biosynthesis; L-isoleucine biosynthesis; L-isoleucine from 2-oxobutanoate: step 3/4. The protein operates within amino-acid biosynthesis; L-valine biosynthesis; L-valine from pyruvate: step 3/4. In terms of biological role, functions in the biosynthesis of branched-chain amino acids. Catalyzes the dehydration of (2R,3R)-2,3-dihydroxy-3-methylpentanoate (2,3-dihydroxy-3-methylvalerate) into 2-oxo-3-methylpentanoate (2-oxo-3-methylvalerate) and of (2R)-2,3-dihydroxy-3-methylbutanoate (2,3-dihydroxyisovalerate) into 2-oxo-3-methylbutanoate (2-oxoisovalerate), the penultimate precursor to L-isoleucine and L-valine, respectively. The chain is Dihydroxy-acid dehydratase from Aliivibrio fischeri (strain ATCC 700601 / ES114) (Vibrio fischeri).